The following is a 788-amino-acid chain: IQ motif and ubiquitin-like domain-containing protein (788 aa).

A disordered region spans residues 1 to 89 (MSDPEEERVA…SLGSASGSQD (89 aa)). The span at 7–20 (ERVADSTAHYEEAG) shows a compositional bias: basic and acidic residues. The span at 31–54 (EAEGSDVMPEQDDEVQELTTESEE) shows a compositional bias: acidic residues. Over residues 68–78 (KSDDSKPREEV) the composition is skewed to basic and acidic residues. The segment covering 80–89 (SLGSASGSQD) has biased composition (polar residues). The Ubiquitin-like domain maps to 127–203 (ATVKIVLIPA…VQVEVFSTLP (77 aa)). An IQ domain is found at 334-363 (RLHAVIVIQTSYRRWHAKRYVESLRKQKKL).

As to quaternary structure, component of the axonemal radial spoke 1 (RS1) complex, at least composed of spoke head proteins RSPH1, RSPH3B, RSPH9 and the cilia-specific component RSPH4A or sperm-specific component RSPH6A, spoke stalk proteins RSPH14, DNAJB13, DYDC1, ROPN1L and NME5, and the anchor protein IQUB. Does not appear to be part of radial spoke complexes 2 or 3 (RS2 or RS3). Interacts with CALM1. Interacts with DNAJB13. Interacts with DYNLL2. Interacts with NME5. Interacts with RSPH3. Interacts with RSPH9. Interacts with ZMYND10. Interacts with calmodulin; the interaction occurs in conditions of low but not high calcium. Expressed in the flagellum of sperm cells and cilia of tracheal epithelial cells (at protein level). High expression in testis, also present in brain and lung.

The protein resides in the cytoplasm. It is found in the cytoskeleton. It localises to the flagellum axoneme. The protein localises to the cell projection. Its subcellular location is the cilium. In terms of biological role, anchors the radial spoke 1 (RS1) complex to the A microtubule of outer doublet microtubules in axonemes. The triple radial spokes (RS1, RS2 and RS3) are required to modulate beating of the sperm flagellum. May play a role in inhibiting signaling via MAPK1/ERK2 and MAPK3/ERK1. Additionally, may play a role in the functioning of cilia. Not required for the functioning of tracheal or ependymal cilia. This Mus musculus (Mouse) protein is IQ motif and ubiquitin-like domain-containing protein (Iqub).